The primary structure comprises 207 residues: Small ribosomal subunit protein uS4 (207 aa).

Positions 33–54 (KLDSKPGQHGRTSGARTSDYGN) are disordered. Positions 42 to 53 (GRTSGARTSDYG) are enriched in polar residues. The region spanning 97-160 (SRLDNVVYRM…KKQVRIAEAL (64 aa)) is the S4 RNA-binding domain.

The protein belongs to the universal ribosomal protein uS4 family. As to quaternary structure, part of the 30S ribosomal subunit. Contacts protein S5. The interaction surface between S4 and S5 is involved in control of translational fidelity.

Its function is as follows. One of the primary rRNA binding proteins, it binds directly to 16S rRNA where it nucleates assembly of the body of the 30S subunit. With S5 and S12 plays an important role in translational accuracy. This Cupriavidus necator (strain ATCC 17699 / DSM 428 / KCTC 22496 / NCIMB 10442 / H16 / Stanier 337) (Ralstonia eutropha) protein is Small ribosomal subunit protein uS4.